The following is a 387-amino-acid chain: Mannose-6-phosphate isomerase (387 aa).

It belongs to the N-acylglucosamine 2-epimerase family.

The catalysed reaction is D-mannose 6-phosphate = D-fructose 6-phosphate. The chain is Mannose-6-phosphate isomerase (pmi) from Rhizobium meliloti (strain 1021) (Ensifer meliloti).